We begin with the raw amino-acid sequence, 356 residues long: MRKIIHIDMDCYYAAVEMRDNPQYRDIPLAIGGSADRRGVISTCNYVARKYGVRSAMATAYARKLCPDLVLVPGRMALYSEISQQIRKIFLRYTDKIEPLSLDEAYLDVTDSELFSGSATLIAQDIRRAIFEETQLTASAGVAPCKFVAKIASDENKPNGICVITPDTQDAFVKTLALGKIPGVGKVTLQKLNNMGLFTCQDVRDYPLDAFVKAFGKFGPVIWDRSHGIDERELSVSRKRKSVGVERTLAQDITTDEECLAMLESLYPKLLSRLEAASPKLAIQSQGVKLKFNDFQQTTVEHRHQVLDKTYFKTLLSEALERRGTRGIRLVGLSVGLPETADVQQMVFNFEHEQNR.

The 182-residue stretch at 4 to 185 (IIHIDMDCYY…LALGKIPGVG (182 aa)) folds into the UmuC domain. Mg(2+) contacts are provided by aspartate 8 and aspartate 103. Glutamate 104 is an active-site residue.

It belongs to the DNA polymerase type-Y family. Monomer. Mg(2+) serves as cofactor.

It localises to the cytoplasm. It catalyses the reaction DNA(n) + a 2'-deoxyribonucleoside 5'-triphosphate = DNA(n+1) + diphosphate. Poorly processive, error-prone DNA polymerase involved in untargeted mutagenesis. Copies undamaged DNA at stalled replication forks, which arise in vivo from mismatched or misaligned primer ends. These misaligned primers can be extended by PolIV. Exhibits no 3'-5' exonuclease (proofreading) activity. May be involved in translesional synthesis, in conjunction with the beta clamp from PolIII. The protein is DNA polymerase IV of Pseudoalteromonas atlantica (strain T6c / ATCC BAA-1087).